A 272-amino-acid polypeptide reads, in one-letter code: uncharacterized protein (272 aa).

The segment at 193 to 250 is disordered; sequence AFLLPNNSKGVEKSEENEDGVTDNDSSNVNSSTNESPNPTDINVCSNDDATDNTENNL. Residues 215–233 show a composition bias toward low complexity; sequence DNDSSNVNSSTNESPNPTD. Positions 235-248 are enriched in polar residues; it reads NVCSNDDATDNTEN.

Belongs to the pal1 family.

It localises to the cytoplasm. The protein localises to the nucleus. This is an uncharacterized protein from Schizosaccharomyces pombe (strain 972 / ATCC 24843) (Fission yeast).